The chain runs to 995 residues: Aconitate hydratase 2, mitochondrial (995 aa).

Residues 1 to 83 constitute a mitochondrion transit peptide; sequence MYRRATSGVR…PASLRAQARN (83 aa). Substrate is bound by residues Gln-187 and 306–308; that span reads DSH. 3 residues coordinate [4Fe-4S] cluster: Cys-538, Cys-604, and Cys-607. Substrate-binding positions include Arg-637, Arg-642, Arg-800, and 881 to 882; that span reads SR.

It belongs to the aconitase/IPM isomerase family. As to quaternary structure, monomer. The cofactor is [4Fe-4S] cluster. In terms of tissue distribution, mostly expressed in roots, leaves and flowers, also present in stems, and, at low levels, in seeds.

It localises to the mitochondrion. It catalyses the reaction citrate = D-threo-isocitrate. The protein operates within carbohydrate metabolism; tricarboxylic acid cycle; isocitrate from oxaloacetate: step 2/2. Functionally, catalyzes the isomerization of citrate to isocitrate via cis-aconitate. Contributes to oxidative stress tolerance. Involved in acetate assimilation. The protein is Aconitate hydratase 2, mitochondrial of Arabidopsis thaliana (Mouse-ear cress).